A 769-amino-acid chain; its full sequence is Polyribonucleotide nucleotidyltransferase (769 aa).

Residues aspartate 490 and aspartate 496 each contribute to the Mg(2+) site. Positions 557–616 constitute a KH domain; that stretch reads PKIDTIMIPVDKIKVVIGKGGEQIDKIIAETGVKIDIDDEGLCSIFSSDQSAIDRAKEII. One can recognise an S1 motif domain in the interval 626–694; that stretch reads GEVYEAKVVR…DKGRVDASMR (69 aa). The span at 700–734 shows a compositional bias: basic and acidic residues; that stretch reads PEGYVEPERKPRERRDNKDRRNGNGFDRRNNDRNN. The tract at residues 700–769 is disordered; that stretch reads PEGYVEPERK…FPELSTKKPE (70 aa). Over residues 736–746 the composition is skewed to low complexity; it reads NNHNNNSGNHS. The segment covering 747-769 has biased composition (basic and acidic residues); it reads FELRERKSHVDHEFPELSTKKPE.

It belongs to the polyribonucleotide nucleotidyltransferase family. Mg(2+) serves as cofactor.

Its subcellular location is the cytoplasm. The enzyme catalyses RNA(n+1) + phosphate = RNA(n) + a ribonucleoside 5'-diphosphate. Its function is as follows. Involved in mRNA degradation. Catalyzes the phosphorolysis of single-stranded polyribonucleotides processively in the 3'- to 5'-direction. The protein is Polyribonucleotide nucleotidyltransferase of Lactococcus lactis subsp. cremoris (strain SK11).